The following is a 1208-amino-acid chain: DNA-directed RNA polymerase subunit beta (1208 aa).

It belongs to the RNA polymerase beta chain family. In terms of assembly, the RNAP catalytic core consists of 2 alpha, 1 beta, 1 beta' and 1 omega subunit. When a sigma factor is associated with the core the holoenzyme is formed, which can initiate transcription.

The enzyme catalyses RNA(n) + a ribonucleoside 5'-triphosphate = RNA(n+1) + diphosphate. Its function is as follows. DNA-dependent RNA polymerase catalyzes the transcription of DNA into RNA using the four ribonucleoside triphosphates as substrates. This chain is DNA-directed RNA polymerase subunit beta, found in Enterococcus faecium (Streptococcus faecium).